The primary structure comprises 383 residues: Chaperone protein DnaJ (383 aa).

The J domain maps to Asp5–Gly70. Residues Gly139 to Gln217 form a CR-type zinc finger. Cys152, Cys155, Cys169, Cys172, Cys191, Cys194, Cys205, and Cys208 together coordinate Zn(2+). CXXCXGXG motif repeat units follow at residues Cys152–Gly159, Cys169–Gly176, Cys191–Gly198, and Cys205–Gly212. Positions Thr230–Pro249 are disordered.

Belongs to the DnaJ family. Homodimer. Zn(2+) is required as a cofactor.

The protein resides in the cytoplasm. Functionally, participates actively in the response to hyperosmotic and heat shock by preventing the aggregation of stress-denatured proteins and by disaggregating proteins, also in an autonomous, DnaK-independent fashion. Unfolded proteins bind initially to DnaJ; upon interaction with the DnaJ-bound protein, DnaK hydrolyzes its bound ATP, resulting in the formation of a stable complex. GrpE releases ADP from DnaK; ATP binding to DnaK triggers the release of the substrate protein, thus completing the reaction cycle. Several rounds of ATP-dependent interactions between DnaJ, DnaK and GrpE are required for fully efficient folding. Also involved, together with DnaK and GrpE, in the DNA replication of plasmids through activation of initiation proteins. This chain is Chaperone protein DnaJ, found in Alkalilimnicola ehrlichii (strain ATCC BAA-1101 / DSM 17681 / MLHE-1).